We begin with the raw amino-acid sequence, 476 residues long: Cysteine--tRNA ligase (476 aa).

Cys31 provides a ligand contact to Zn(2+). Residues 33–43 carry the 'HIGH' region motif; that stretch reads PTVYNYAHIGN. Positions 211, 236, and 240 each coordinate Zn(2+). Positions 269–273 match the 'KMSKS' region motif; that stretch reads KMSKS. ATP is bound at residue Lys272.

It belongs to the class-I aminoacyl-tRNA synthetase family. As to quaternary structure, monomer. Requires Zn(2+) as cofactor.

The protein localises to the cytoplasm. It catalyses the reaction tRNA(Cys) + L-cysteine + ATP = L-cysteinyl-tRNA(Cys) + AMP + diphosphate. This chain is Cysteine--tRNA ligase, found in Xanthomonas axonopodis pv. citri (strain 306).